Consider the following 33-residue polypeptide: Photosystem II reaction center protein Psb30 (33 aa).

A helical transmembrane segment spans residues 7-27 (IQLGSLTLITLTGPLIIGIIF).

The protein belongs to the Psb30/Ycf12 family. As to quaternary structure, PSII is composed of 1 copy each of membrane proteins PsbA, PsbB, PsbC, PsbD, PsbE, PsbF, PsbH, PsbI, PsbJ, PsbK, PsbL, PsbM, PsbT, PsbY, PsbZ, Psb30/Ycf12, peripheral proteins of the oxygen-evolving complex and a large number of cofactors. It forms dimeric complexes.

Its subcellular location is the plastid. It is found in the chloroplast thylakoid membrane. In terms of biological role, a core subunit of photosystem II (PSII), probably helps stabilize the reaction center. This is Photosystem II reaction center protein Psb30 from Euglena gracilis.